The primary structure comprises 276 residues: Mitochondrial outer membrane protein porin 1 (276 aa).

The protein belongs to the eukaryotic mitochondrial porin (TC 1.B.8.1) family. As to expression, expressed in shoot meristems, root meristematic zone, lateral roots, leaves, stigma and anthers.

The protein resides in the mitochondrion outer membrane. Functionally, forms a channel through the mitochondrial outer membrane that allows diffusion of small hydrophilic molecules. The channel adopts an open conformation at low or zero membrane potential and a closed conformation at potentials above 30-40 mV. The open state has a weak anion selectivity whereas the closed state is cation-selective. Involved in plant development at reproductive stage, is important for pollen development and may regulate hydrogen peroxide generation during disease resistance. The protein is Mitochondrial outer membrane protein porin 1 (VDAC1) of Arabidopsis thaliana (Mouse-ear cress).